The chain runs to 666 residues: Probable potassium transport system protein Kup (666 aa).

12 helical membrane passes run glycine 16–methionine 36, isoleucine 58–leucine 78, proline 100–threonine 120, isoleucine 141–glycine 161, phenylalanine 165–leucine 185, isoleucine 221–leucine 241, tryptophan 253–alanine 273, valine 294–glycine 314, leucine 343–phenylalanine 363, tyrosine 373–isoleucine 393, proline 399–alanine 419, and phenylalanine 424–isoleucine 444.

The protein belongs to the HAK/KUP transporter (TC 2.A.72) family.

The protein localises to the cell membrane. It catalyses the reaction K(+)(in) + H(+)(in) = K(+)(out) + H(+)(out). Transport of potassium into the cell. Likely operates as a K(+):H(+) symporter. The polypeptide is Probable potassium transport system protein Kup (Streptococcus pyogenes serotype M49 (strain NZ131)).